We begin with the raw amino-acid sequence, 181 residues long: MNGFSTEEDSRDGPPAQAAPFFGQTCCLIDGGERCPRPAGNASFSKRVQKSISQKKLKLDIDKNVRHLYICDFHKNYIQSVRNKRKRKTSDDGGDSPEHETDIPEVDLFQLQVNTLRRYKRYYKLQTRPGLNKAQLAETVSRHFRNIPVNEKETLAYFIYMVKSNRSRLDQKSESSKQLEA.

2 disulfides stabilise this stretch: cysteine 26-cysteine 27 and cysteine 35-cysteine 71. The segment at 26–74 (CCLIDGGERCPRPAGNASFSKRVQKSISQKKLKLDIDKNVRHLYICDFH) adopts an Atypical zinc-finger fold. The tract at residues 82–103 (RNKRKRKTSDDGGDSPEHETDI) is disordered. Residues 83 to 88 (NKRKRK) carry the Nuclear localization signal (NLS) motif. The important for DNA and phosphoinositide binding stretch occupies residues 85–87 (RKR).

It belongs to the SAP30 family. Interacts with components of the histone deacetylase complex sin3a, hdac1 and hdac2. Binds histones and nucleosomes.

The protein localises to the nucleus. It is found in the nucleolus. Functionally, functions as a transcription repressor, probably via its interaction with histone deacetylase complexes. Involved in the functional recruitment of the class 1 Sin3-histone deacetylase complex (HDAC) to the nucleolus. Binds DNA, apparently without sequence-specificity, and bends bound double-stranded DNA. Binds phosphoinositol phosphates (phosphoinositol 3-phosphate, phosphoinositol 4-phosphate and phosphoinositol 5-phosphate) via the same basic sequence motif that mediates DNA binding and nuclear import. The chain is Histone deacetylase complex subunit SAP30L-A (sap30l-a) from Xenopus laevis (African clawed frog).